The chain runs to 154 residues: UPF0178 protein SPO3827 (154 aa).

This sequence belongs to the UPF0178 family.

In Ruegeria pomeroyi (strain ATCC 700808 / DSM 15171 / DSS-3) (Silicibacter pomeroyi), this protein is UPF0178 protein SPO3827.